We begin with the raw amino-acid sequence, 856 residues long: Probable alpha,alpha-trehalose-phosphate synthase [UDP-forming] 8 (856 aa).

Position 5 is a phosphoserine (Ser5). Phosphothreonine is present on Thr32. The tract at residues 57 to 541 is glycosyltransferase; it reads ERKIIVANML…AKSFMQDLER (485 aa).

It in the N-terminal section; belongs to the glycosyltransferase 20 family. This sequence in the C-terminal section; belongs to the trehalose phosphatase family. As to expression, expressed in leaves, roots, stems and flowers.

It catalyses the reaction D-glucose 6-phosphate + UDP-alpha-D-glucose = alpha,alpha-trehalose 6-phosphate + UDP + H(+). In Arabidopsis thaliana (Mouse-ear cress), this protein is Probable alpha,alpha-trehalose-phosphate synthase [UDP-forming] 8 (TPS8).